Reading from the N-terminus, the 544-residue chain is Chaperonin GroEL (544 aa).

Residues 30–33, K51, 87–91, G415, and D495 contribute to the ATP site; these read TLGP and DGTTT.

It belongs to the chaperonin (HSP60) family. In terms of assembly, forms a cylinder of 14 subunits composed of two heptameric rings stacked back-to-back. Interacts with the co-chaperonin GroES.

It localises to the cell outer membrane. It carries out the reaction ATP + H2O + a folded polypeptide = ADP + phosphate + an unfolded polypeptide.. In terms of biological role, together with its co-chaperonin GroES, plays an essential role in assisting protein folding. The GroEL-GroES system forms a nano-cage that allows encapsulation of the non-native substrate proteins and provides a physical environment optimized to promote and accelerate protein folding. The chain is Chaperonin GroEL from Neisseria gonorrhoeae.